The chain runs to 184 residues: Ribosome-recycling factor (184 aa).

The segment at Met-134–Ile-167 is disordered.

This sequence belongs to the RRF family.

It is found in the cytoplasm. Responsible for the release of ribosomes from messenger RNA at the termination of protein biosynthesis. May increase the efficiency of translation by recycling ribosomes from one round of translation to another. This is Ribosome-recycling factor from Staphylococcus aureus (strain Mu3 / ATCC 700698).